Here is a 451-residue protein sequence, read N- to C-terminus: Tubulin alpha chain (451 aa).

Gln-11 serves as a coordination point for GTP. N6-acetyllysine is present on Lys-40. GTP is bound by residues Glu-71, Gly-144, Thr-145, Thr-179, Asn-206, and Asn-228. Glu-71 contacts Mg(2+). Residue Glu-254 is part of the active site.

It belongs to the tubulin family. As to quaternary structure, dimer of alpha and beta chains. A typical microtubule is a hollow water-filled tube with an outer diameter of 25 nm and an inner diameter of 15 nM. Alpha-beta heterodimers associate head-to-tail to form protofilaments running lengthwise along the microtubule wall with the beta-tubulin subunit facing the microtubule plus end conferring a structural polarity. Microtubules usually have 13 protofilaments but different protofilament numbers can be found in some organisms and specialized cells. It depends on Mg(2+) as a cofactor. In terms of processing, undergoes a tyrosination/detyrosination cycle, the cyclic removal and re-addition of a C-terminal tyrosine residue by the enzymes tubulin tyrosine carboxypeptidase (TTCP) and tubulin tyrosine ligase (TTL), respectively. Post-translationally, acetylation of alpha chains at Lys-40 stabilizes microtubules and affects affinity and processivity of microtubule motors. This modification has a role in multiple cellular functions, ranging from cell motility, cell cycle progression or cell differentiation to intracellular trafficking and signaling.

It is found in the cytoplasm. The protein resides in the cytoskeleton. It carries out the reaction GTP + H2O = GDP + phosphate + H(+). Tubulin is the major constituent of microtubules, a cylinder consisting of laterally associated linear protofilaments composed of alpha- and beta-tubulin heterodimers. Microtubules grow by the addition of GTP-tubulin dimers to the microtubule end, where a stabilizing cap forms. Below the cap, tubulin dimers are in GDP-bound state, owing to GTPase activity of alpha-tubulin. The polypeptide is Tubulin alpha chain (TUBA) (Euglena gracilis).